We begin with the raw amino-acid sequence, 37 residues long: MKVRASVKKMCDNCRVIKRKGKVMVICSNAKHKQRQG.

The protein belongs to the bacterial ribosomal protein bL36 family.

It localises to the plastid. The protein localises to the chloroplast. In Chlamydomonas reinhardtii (Chlamydomonas smithii), this protein is Large ribosomal subunit protein bL36c (rpl36).